Here is a 795-residue protein sequence, read N- to C-terminus: Delta-1-pyrroline-5-carboxylate synthase (795 aa).

Residues 1-361 (MLRHMHRSGV…FFSEVKPAGP (361 aa)) form a glutamate 5-kinase region. Substrate contacts are provided by Ser117, Asp223, and Asn246. Residues 266-267 (SD) and 305-311 (LGGMEAK) contribute to the ATP site. N6-succinyllysine occurs at positions 311, 347, and 550. The gamma-glutamyl phosphate reductase stretch occupies residues 362–795 (TVEQQGEMAR…NLPVPQRNFS (434 aa)).

The protein in the N-terminal section; belongs to the glutamate 5-kinase family. It in the C-terminal section; belongs to the gamma-glutamyl phosphate reductase family. In terms of assembly, can form homodimers/multimers.

The protein resides in the mitochondrion matrix. It carries out the reaction L-glutamate + ATP = L-glutamyl 5-phosphate + ADP. The catalysed reaction is L-glutamate 5-semialdehyde + phosphate + NADP(+) = L-glutamyl 5-phosphate + NADPH + H(+). The protein operates within amino-acid biosynthesis; L-proline biosynthesis; L-glutamate 5-semialdehyde from L-glutamate: step 1/2. It functions in the pathway amino-acid biosynthesis; L-proline biosynthesis; L-glutamate 5-semialdehyde from L-glutamate: step 2/2. Its activity is regulated as follows. Isoform Short: Inhibited by L-ornithine with a Ki of approximately 0.25 mm. Isoform Long: Insensitive to ornithine inhibition. Thus, the two amino acid insert in the long isoform abolishes feedback inhibition of P5CS activity by L-ornithine. Its function is as follows. Bifunctional enzyme that converts glutamate to glutamate 5-semialdehyde, an intermediate in the biosynthesis of proline, ornithine and arginine. This Mus musculus (Mouse) protein is Delta-1-pyrroline-5-carboxylate synthase (Aldh18a1).